Consider the following 93-residue polypeptide: uncharacterized protein (93 aa).

This sequence to E.coli YdbD C-terminal region.

This is an uncharacterized protein from Escherichia coli (strain K12).